The sequence spans 132 residues: Large ribosomal subunit protein uL14 (132 aa).

It belongs to the universal ribosomal protein uL14 family. As to quaternary structure, part of the 50S ribosomal subunit. Forms a cluster with proteins L3 and L24e, part of which may contact the 16S rRNA in 2 intersubunit bridges.

Its function is as follows. Binds to 23S rRNA. Forms part of two intersubunit bridges in the 70S ribosome. This is Large ribosomal subunit protein uL14 from Methanococcus maripaludis (strain C7 / ATCC BAA-1331).